Here is a 308-residue protein sequence, read N- to C-terminus: Very-long-chain enoyl-CoA reductase (308 aa).

Residues 1 to 86 (MKHYEVEILD…YFRDLGAQIS (86 aa)) lie on the Cytoplasmic side of the membrane. Lys-22 is subject to N6-acetyllysine. Residue Ser-58 is modified to Phosphoserine. Lys-60 bears the N6-acetyllysine mark. A helical membrane pass occupies residues 87–106 (WVTVFLTEYAGPLFIYLLFY). At 107–124 (FRVPFIYGHKYDFTSSRH) the chain is on the lumenal side. A helical transmembrane segment spans residues 125–147 (TVVHLACICHSFHYIKRLLETLF). The Cytoplasmic segment spans residues 148–158 (VHRFSHGTMPL). The chain crosses the membrane as a helical span at residues 159 to 180 (RNIFKNCTYYWGFAAWMAYYIN). At 181-189 (HPLYTPPTY) the chain is on the lumenal side. A helical membrane pass occupies residues 190-216 (GAQQVKLALAIFVICQLGNFSIHMALR). The Cytoplasmic segment spans residues 217 to 245 (DLRPAGSKTRKIPYPTKNPFTWLFLLVSC). Residues 246 to 262 (PNYTYEVGSWIGFAIMT) form a helical membrane-spanning segment. At 263–264 (QC) the chain is on the lumenal side. A helical transmembrane segment spans residues 265-292 (LPVALFSLVGFTQMTIWAKGKHRSYLKE). The Cytoplasmic segment spans residues 293 to 308 (FRDYPPLRMPIIPFLL).

It belongs to the steroid 5-alpha reductase family. Interacts with ELOVL1 and LASS2. Interacts with HACD1 and HACD2 (via the third lumenal loop), but not with HACD3 and HACD4. Interacts with ELOVL1, ELOVL2, ELOVL3, ELOVL5 and ELOVL7 in the presence of acyl-CoA; interaction with HACD1/2 and that with ELOVLs are mutually exclusive. Glycosylated. As to expression, expressed in most tissues tested. Highly expressed in skeletal muscle.

The protein localises to the endoplasmic reticulum membrane. The catalysed reaction is a very-long-chain 2,3-saturated fatty acyl-CoA + NADP(+) = a very-long-chain (2E)-enoyl-CoA + NADPH + H(+). It catalyses the reaction octadecanoyl-CoA + NADP(+) = (2E)-octadecenoyl-CoA + NADPH + H(+). The enzyme catalyses (2E,7Z,10Z,13Z,16Z)-docosapentaenoyl-CoA + NADPH + H(+) = (7Z,10Z,13Z,16Z)-docosatetraenoyl-CoA + NADP(+). It carries out the reaction (2E,7Z,10Z,13Z,16Z,19Z)-docosahexaenoyl-CoA + NADPH + H(+) = (7Z,10Z,13Z,16Z,19Z)-docosapentaenoyl-CoA + NADP(+). The catalysed reaction is (2E,8Z,11Z,14Z)-eicosatetraenoyl-CoA + NADPH + H(+) = (8Z,11Z,14Z)-eicosatrienoyl-CoA + NADP(+). It catalyses the reaction (2E)-hexadecenoyl-CoA + NADPH + H(+) = hexadecanoyl-CoA + NADP(+). It participates in lipid metabolism; fatty acid biosynthesis. Its pathway is lipid metabolism; sphingolipid metabolism. Its function is as follows. Involved in both the production of very long-chain fatty acids for sphingolipid synthesis and the degradation of the sphingosine moiety in sphingolipids through the sphingosine 1-phosphate metabolic pathway. Catalyzes the last of the four reactions of the long-chain fatty acids elongation cycle. This endoplasmic reticulum-bound enzymatic process, allows the addition of 2 carbons to the chain of long- and very long-chain fatty acids/VLCFAs per cycle. This enzyme reduces the trans-2,3-enoyl-CoA fatty acid intermediate to an acyl-CoA that can be further elongated by entering a new cycle of elongation. Thereby, it participates in the production of VLCFAs of different chain lengths that are involved in multiple biological processes as precursors of membrane lipids and lipid mediators. Catalyzes the saturation step of the sphingosine 1-phosphate metabolic pathway, the conversion of trans-2-hexadecenoyl-CoA to palmitoyl-CoA. The chain is Very-long-chain enoyl-CoA reductase (TECR) from Homo sapiens (Human).